Consider the following 1014-residue polypeptide: Klotho (1014 aa).

The signal sequence occupies residues 1–34 (MPARAPPRRLPRLLLLRLLSLHLLLLTLRARCLS). Over 35 to 983 (AEPGQGAQTW…GCGFFQTRKS (949 aa)) the chain is Extracellular. Glycosyl hydrolase-1 stretches follow at residues 59–508 (LHDT…NNGF) and 517–955 (LEGT…NNGF). Asparagine 161, asparagine 285, asparagine 346, asparagine 609, asparagine 614, and asparagine 696 each carry an N-linked (GlcNAc...) asparagine glycan. The chain crosses the membrane as a helical span at residues 984 to 1004 (LLAFISFLVFAFVTSLALIYY). Residues 1005 to 1014 (YSKKGRRRYK) lie on the Cytoplasmic side of the membrane.

Belongs to the glycosyl hydrolase 1 family. Klotho subfamily. In terms of assembly, homodimer. Interacts with FGF23 and FGFR1. N-glycosylated. Present in cortical renal tubules and the parathyroid (at protein level). Strongly expressed in kidney. Expressed at low levels in brain, lung, intestine and ovaries.

Its subcellular location is the cell membrane. It localises to the apical cell membrane. The protein resides in the secreted. The enzyme catalyses a beta-D-glucuronoside + H2O = D-glucuronate + an alcohol. May have weak glycosidase activity towards glucuronylated steroids. However, it lacks essential active site Glu residues at positions 241 and 874, suggesting it may be inactive as a glycosidase in vivo. May be involved in the regulation of calcium and phosphorus homeostasis by inhibiting the synthesis of active vitamin D. Essential factor for the specific interaction between FGF23 and FGFR1. Its function is as follows. The Klotho peptide generated by cleavage of the membrane-bound isoform may be an anti-aging circulating hormone which would extend life span by inhibiting insulin/IGF1 signaling. This is Klotho (Kl) from Rattus norvegicus (Rat).